Reading from the N-terminus, the 440-residue chain is Actin-like protein 7A (440 aa).

Residues 1–27 (MSLDAVWAPQTANIGDGPAKKASDQTS) are disordered. Positions 36-56 (ASLRDGPAKRAVWVRRDNAEK) are required for interaction with TES.

This sequence belongs to the actin family. In terms of assembly, interacts (via N-terminus) with TES (via LIM domain 2). Heterodimer with TES; the heterodimer interacts with ENAH to form a heterotrimer. Interacts with ACTL9. Interacts with CYLC1; the interaction may be relevant for proper acrosome attachment to the nuclear envelope. As to expression, detected in testis. Detected at the acrosome of round spermatids (at protein level).

It is found in the cytoplasm. The protein resides in the cytoskeleton. Its subcellular location is the golgi apparatus. It localises to the nucleus. Essential for normal spermatogenesis and male fertility. Required for normal sperm head morphology, acroplaxome formation, acrosome attachment, and acrosome granule stability. May anchor and stabilize acrosomal adherence to the acroplaxome at least in part by facilitating the presence of F-actin in the subacrosomal space. May play an important role in formation and fusion of Golgi-derived vesicles during acrosome biogenesis. The sequence is that of Actin-like protein 7A (Actl7a) from Rattus norvegicus (Rat).